The primary structure comprises 88 residues: UPF0297 protein YrzL (88 aa).

The protein belongs to the UPF0297 family.

The polypeptide is UPF0297 protein YrzL (yrzL) (Bacillus subtilis (strain 168)).